Reading from the N-terminus, the 882-residue chain is ABC transporter H family member 4 (882 aa).

Helical transmembrane passes span 4–24 (WIKLKLTAIGWFIYGMPISVF), 35–55 (LLFKTIAVHYIIPLIIELLPW), and 79–101 (TNGPYSHSAVIKYVLLTIYYAIL). Positions 384-863 (FSYENKFSSE…NAQVYYKLLG (480 aa)) constitute an ABC transporter domain. Residue 418–425 (GQNRSGKS) participates in ATP binding. Disordered stretches follow at residues 522–617 (FDPD…YSTI), 634–669 (SMSQLNNSGGGNVNGNNNNNNNNNNNNNININNSGV), and 710–730 (NSGGGDESDDDDEEAERNQRS). 2 stretches are compositionally biased toward low complexity: residues 528-617 (IPPT…YSTI) and 647-667 (NGNNNNNNNNNNNNNININNS). The segment covering 715-724 (DESDDDDEEA) has biased composition (acidic residues).

The protein belongs to the ABC transporter superfamily. ABCH family.

The protein localises to the membrane. The protein is ABC transporter H family member 4 (abcH4) of Dictyostelium discoideum (Social amoeba).